Reading from the N-terminus, the 230-residue chain is Ribosomal RNA small subunit methyltransferase G (230 aa).

Residues Gly80, Phe85, Val131–Glu132, and Arg145 each bind S-adenosyl-L-methionine.

This sequence belongs to the methyltransferase superfamily. RNA methyltransferase RsmG family.

The protein resides in the cytoplasm. It catalyses the reaction guanosine(527) in 16S rRNA + S-adenosyl-L-methionine = N(7)-methylguanosine(527) in 16S rRNA + S-adenosyl-L-homocysteine. Specifically methylates the N7 position of guanine in position 527 of 16S rRNA. This Novosphingobium aromaticivorans (strain ATCC 700278 / DSM 12444 / CCUG 56034 / CIP 105152 / NBRC 16084 / F199) protein is Ribosomal RNA small subunit methyltransferase G.